The chain runs to 513 residues: ATP synthase subunit alpha (513 aa).

An ATP-binding site is contributed by 170 to 177 (GDRQTGKT).

Belongs to the ATPase alpha/beta chains family. F-type ATPases have 2 components, CF(1) - the catalytic core - and CF(0) - the membrane proton channel. CF(1) has five subunits: alpha(3), beta(3), gamma(1), delta(1), epsilon(1). CF(0) has three main subunits: a(1), b(2) and c(9-12). The alpha and beta chains form an alternating ring which encloses part of the gamma chain. CF(1) is attached to CF(0) by a central stalk formed by the gamma and epsilon chains, while a peripheral stalk is formed by the delta and b chains.

It is found in the cell inner membrane. It catalyses the reaction ATP + H2O + 4 H(+)(in) = ADP + phosphate + 5 H(+)(out). In terms of biological role, produces ATP from ADP in the presence of a proton gradient across the membrane. The alpha chain is a regulatory subunit. The chain is ATP synthase subunit alpha from Teredinibacter turnerae (strain ATCC 39867 / T7901).